The sequence spans 317 residues: Metaxin-1 (317 aa).

Glycyl lysine isopeptide (Lys-Gly) (interchain with G-Cter in ubiquitin) cross-links involve residues Lys-38, Lys-41, and Lys-78. Residues 164–184 (EELEKELYREARECLTLLSQR) traverse the membrane as a helical segment.

It belongs to the metaxin family. In terms of assembly, interacts with MTX2/metaxin-2. Associates with the mitochondrial contact site and cristae organizing system (MICOS) complex, composed of at least MICOS10/MIC10, CHCHD3/MIC19, CHCHD6/MIC25, APOOL/MIC27, IMMT/MIC60, APOO/MIC23/MIC26 and QIL1/MIC13. This complex was also known under the names MINOS or MitOS complex. The MICOS complex associates with mitochondrial outer membrane proteins SAMM50, MTX1 and MTX2 (together described as components of the mitochondrial outer membrane sorting assembly machinery (SAM) complex) and DNAJC11, mitochondrial inner membrane protein TMEM11 and with HSPA9. The MICOS and SAM complexes together with DNAJC11 are part of a large protein complex spanning both membranes termed the mitochondrial intermembrane space bridging (MIB) complex. Interacts with ARMC1. Ubiquitinated by PRKN during mitophagy, leading to its degradation and enhancement of mitophagy. Deubiquitinated by USP30.

The protein resides in the mitochondrion outer membrane. Involved in transport of proteins into the mitochondrion. Essential for embryonic development. The protein is Metaxin-1 (MTX1) of Macaca fascicularis (Crab-eating macaque).